The sequence spans 321 residues: Glutaminase (321 aa).

Substrate is bound by residues S69, N120, E165, N172, Y196, Y248, and V266.

Belongs to the glutaminase family. In terms of assembly, homotetramer.

It catalyses the reaction L-glutamine + H2O = L-glutamate + NH4(+). The chain is Glutaminase from Bacteroides thetaiotaomicron (strain ATCC 29148 / DSM 2079 / JCM 5827 / CCUG 10774 / NCTC 10582 / VPI-5482 / E50).